A 244-amino-acid chain; its full sequence is Transcriptional activator protein CarR (244 aa).

The HTH luxR-type domain maps to 162 to 227 (DNSRNALLSP…HAITKALELN (66 aa)). Positions 186 to 205 (YKEVSRILGISEVTVKFHIN) form a DNA-binding region, H-T-H motif.

The protein belongs to the autoinducer-regulated transcriptional regulatory protein family.

Its function is as follows. Functions as an OHLL responsive transcriptional regulator which acts in the control of the biosynthesis of carbapenem antibiotics. In Pectobacterium carotovorum subsp. carotovorum (Erwinia carotovora subsp. carotovora), this protein is Transcriptional activator protein CarR (carR).